The chain runs to 80 residues: Conotoxin PnMKLT1-0121 (80 aa).

Positions 1 to 22 are cleaved as a signal peptide; that stretch reads MKLTCMMIVAVLFLTAWTFATA. Positions 23-49 are excised as a propeptide; that stretch reads DDPRNRLENFFSKTQHEMKNPEASKLN. Cystine bridges form between C52–C67, C59–C71, and C66–C75.

It belongs to the conotoxin O1 superfamily. In terms of tissue distribution, expressed by the venom duct.

It is found in the secreted. The sequence is that of Conotoxin PnMKLT1-0121 from Conus pennaceus (Feathered cone).